Here is a 191-residue protein sequence, read N- to C-terminus: Ribonuclease HII (191 aa).

The 185-residue stretch at 7-191 folds into the RNase H type-2 domain; that stretch reads ILMAGVDEVG…YSPVADLISK (185 aa). A divalent metal cation-binding residues include D13, E14, and D103.

Belongs to the RNase HII family. The cofactor is Mn(2+). Mg(2+) is required as a cofactor.

It is found in the cytoplasm. It carries out the reaction Endonucleolytic cleavage to 5'-phosphomonoester.. Endonuclease that specifically degrades the RNA of RNA-DNA hybrids. The sequence is that of Ribonuclease HII from Legionella pneumophila subsp. pneumophila (strain Philadelphia 1 / ATCC 33152 / DSM 7513).